A 140-amino-acid chain; its full sequence is MKIKHEHIESVLFALAAEKGQAWVANAITEEYLRQGGGELPLVPGKDWNNQQNIYHRWLKGETKTQREKIQKLIPAILAILPRELRHRLCIFDTLERRALLAAQEALSTAIDAHDDAVQAVYRKAHFSGGGSSDDSVIVH.

In terms of biological role, transcriptional regulator that causes a severe detrimental growth effect and reduces cell viability. When expressed, it alters expression of a variety of bacterial regulons normally controlled by the transcriptional regulatory protein RcsA, resulting in deficient lipopolysaccharide biosynthesis and cell division. YdaT has no effect on Rac prophage excision. Overexpression of ydaST reduces growth and leads to loss of cell viability. May contribute to toxicity and morphological defects. This chain is Transcriptional regulator YdaT (ydaT), found in Escherichia coli (strain K12).